We begin with the raw amino-acid sequence, 411 residues long: Serine hydroxymethyltransferase (411 aa).

Position 120 to 122 (120 to 122 (GHL)) interacts with (6S)-5,6,7,8-tetrahydrofolate. Position 225 is an N6-(pyridoxal phosphate)lysine (Lys-225). 350-352 (SPF) is a (6S)-5,6,7,8-tetrahydrofolate binding site.

This sequence belongs to the SHMT family. In terms of assembly, homodimer. Pyridoxal 5'-phosphate serves as cofactor.

It is found in the cytoplasm. It carries out the reaction (6R)-5,10-methylene-5,6,7,8-tetrahydrofolate + glycine + H2O = (6S)-5,6,7,8-tetrahydrofolate + L-serine. Its pathway is one-carbon metabolism; tetrahydrofolate interconversion. It functions in the pathway amino-acid biosynthesis; glycine biosynthesis; glycine from L-serine: step 1/1. Its function is as follows. Catalyzes the reversible interconversion of serine and glycine with tetrahydrofolate (THF) serving as the one-carbon carrier. This reaction serves as the major source of one-carbon groups required for the biosynthesis of purines, thymidylate, methionine, and other important biomolecules. Also exhibits THF-independent aldolase activity toward beta-hydroxyamino acids, producing glycine and aldehydes, via a retro-aldol mechanism. The protein is Serine hydroxymethyltransferase of Lactobacillus acidophilus (strain ATCC 700396 / NCK56 / N2 / NCFM).